We begin with the raw amino-acid sequence, 450 residues long: UPF0210 protein MK1214 (450 aa).

The protein belongs to the UPF0210 family.

This is UPF0210 protein MK1214 from Methanopyrus kandleri (strain AV19 / DSM 6324 / JCM 9639 / NBRC 100938).